Consider the following 116-residue polypeptide: C-C motif chemokine 6 (116 aa).

The signal sequence occupies residues 1–21; sequence MRNSKTAISFFILVAVLGSQA. 3 cysteine pairs are disulfide-bonded: cysteine 50–cysteine 73, cysteine 51–cysteine 89, and cysteine 60–cysteine 100.

Belongs to the intercrine beta (chemokine CC) family. In terms of processing, the N-terminal is proteolytically cleaved by proteases associated with inflammatory responses. The processed forms CL6(22-95) and CCL6(23-95) show increase in CCR1-mediated signaling and chemotaxis assays in vitro. In terms of tissue distribution, expressed in myelopoietic bone marrow cultures stimulated by GM-CSF.

The protein localises to the secreted. Functionally, chemotactic factor that attracts mostly macrophage, but it can also attract B cells, CD4(+) lymphocytes and eosinophils. This is C-C motif chemokine 6 (Ccl6) from Mus musculus (Mouse).